Here is a 549-residue protein sequence, read N- to C-terminus: uncharacterized protein (549 aa).

12 helical membrane-spanning segments follow: residues 27–47 (ILRF…YVFV), 108–128 (PIVV…GVIF), 146–166 (TGLV…LAIA), 197–217 (AVAI…IPML), 233–253 (FIAI…FLLV), 265–285 (VAAI…LISL), 308–328 (FLVI…LSIL), 352–372 (LVLL…IFGV), 399–419 (TLLV…VGLG), 434–454 (LMLA…VAIG), 472–492 (IVSL…FQAI), and 501–521 (IFIW…VLIG).

It is found in the cell membrane. This is an uncharacterized protein from Mycoplasma pneumoniae (strain ATCC 29342 / M129 / Subtype 1) (Mycoplasmoides pneumoniae).